Here is a 288-residue protein sequence, read N- to C-terminus: Phospholipid phosphatase 2 (288 aa).

Topologically, residues 1 to 4 are cytoplasmic; sequence MQRR. A helical membrane pass occupies residues 5 to 25; the sequence is WVFVLLDVLCLLVASLPFAIL. Topologically, residues 26 to 51 are lumenal; the sequence is TLVNAPYKRGFYCGDDSIRYPYRPDT. The helical transmembrane segment at 52-72 threads the bilayer; sequence ITHGLMAGVTITATVILVSAG. At 73-87 the chain is on the cytoplasmic side; the sequence is EAYLVYTDRLYSRSD. The helical transmembrane segment at 88 to 108 threads the bilayer; it reads FNNYVAAVYKVLGTFLFGAAV. Over 109–162 the chain is Lumenal; the sequence is SQSLTDLAKYMIGRLRPNFLAVCDPDWSRVNCSVYVQLEKVCRGNPADVTEARL. A phosphatase sequence motif I region spans residues 117 to 125; the sequence is KYMIGRLRP. Asparagine 139 is a glycosylation site (N-linked (GlcNAc...) asparagine). A helical membrane pass occupies residues 163–183; it reads SFYSGHSSFGMYCMVFLALYV. The phosphatase sequence motif II stretch occupies residues 165–168; sequence YSGH. Histidine 168 functions as the Proton donors in the catalytic mechanism. At 184–196 the chain is on the cytoplasmic side; sequence QARLCWKWARLLR. A helical transmembrane segment spans residues 197–217; it reads PTVQFFLVAFALYVGYTRVSD. The interval 213–224 is phosphatase sequence motif III; sequence TRVSDYKHHWSD. Over 218 to 226 the chain is Lumenal; that stretch reads YKHHWSDVL. Catalysis depends on histidine 220, which acts as the Nucleophile. The chain crosses the membrane as a helical span at residues 227–247; it reads VGLLQGALVAALTVCYISDFF. Residues 248-288 are Cytoplasmic-facing; sequence KARPPQHCLKEEELERKPSLSLTLTLGEADHNHYGYPHSSS.

This sequence belongs to the PA-phosphatase related phosphoesterase family. Forms functional homodimers and homooligomers. Can also form heterooligomers with PLPP1 and PLPP3. In terms of processing, N-glycosylated. In terms of tissue distribution, found mainly in brain, pancreas and placenta.

The protein localises to the membrane. It is found in the cell membrane. Its subcellular location is the early endosome membrane. The protein resides in the endoplasmic reticulum membrane. The catalysed reaction is a 1,2-diacyl-sn-glycero-3-phosphate + H2O = a 1,2-diacyl-sn-glycerol + phosphate. The enzyme catalyses 1,2-dihexadecanoyl-sn-glycero-3-phosphate + H2O = 1,2-dihexadecanoyl-sn-glycerol + phosphate. It catalyses the reaction 1,2-di-(9Z-octadecenoyl)-sn-glycero-3-phosphate + H2O = 1,2-di-(9Z-octadecenoyl)-sn-glycerol + phosphate. It carries out the reaction a monoacyl-sn-glycero-3-phosphate + H2O = a monoacylglycerol + phosphate. The catalysed reaction is (9Z)-octadecenoyl-sn-glycero-3-phosphate + H2O = (9Z-octadecenoyl)-glycerol + phosphate. The enzyme catalyses sphing-4-enine 1-phosphate + H2O = sphing-4-enine + phosphate. It catalyses the reaction an N-acylsphing-4-enine 1-phosphate + H2O = an N-acylsphing-4-enine + phosphate. It carries out the reaction N-(octanoyl)-sphing-4-enine-1-phosphate + H2O = N-octanoylsphing-4-enine + phosphate. The catalysed reaction is N-(9Z-octadecenoyl)-ethanolamine phosphate + H2O = N-(9Z-octadecenoyl) ethanolamine + phosphate. It participates in lipid metabolism; phospholipid metabolism. Its activity is regulated as follows. Magnesium-independent phospholipid phosphatase. Insensitive to N-ethylmaleimide. Inhibited by sphingosine, zinc ions and modestly by propanolol. Its function is as follows. Magnesium-independent phospholipid phosphatase that catalyzes the dephosphorylation of a variety of glycerolipid and sphingolipid phosphate esters including phosphatidate/PA, lysophosphatidate/LPA, sphingosine 1-phosphate/S1P and ceramide 1-phosphate/C1P. Has no apparent extracellular phosphatase activity and therefore most probably acts intracellularly. Also acts on N-oleoyl ethanolamine phosphate/N-(9Z-octadecenoyl)-ethanolamine phosphate, a potential physiological compound. Through dephosphorylation of these bioactive lipid mediators produces new bioactive compounds and may regulate signal transduction in different cellular processes. Indirectly regulates, for instance, cell cycle G1/S phase transition through its phospholipid phosphatase activity. This Homo sapiens (Human) protein is Phospholipid phosphatase 2.